The sequence spans 280 residues: Protease HtpX (280 aa).

2 helical membrane-spanning segments follow: residues 7–26 and 30–49; these read TFIL…GLLG and GMLI…YWYS. H129 contributes to the Zn(2+) binding site. E130 is an active-site residue. H133 serves as a coordination point for Zn(2+). Transmembrane regions (helical) follow at residues 146 to 166 and 178 to 198; these read ATIA…SMFG and VVGM…QMAI. Residue E203 participates in Zn(2+) binding.

Belongs to the peptidase M48B family. It depends on Zn(2+) as a cofactor.

The protein resides in the cell inner membrane. The chain is Protease HtpX from Legionella pneumophila subsp. pneumophila (strain Philadelphia 1 / ATCC 33152 / DSM 7513).